Consider the following 544-residue polypeptide: MAVALFPILPIGCLLIYIIFKLWTRDERLKHLPPGPKGLPVIGNMLDMADTDKMMKKSKDWADEYGEIFYTKVGLYNFVWLSSPNAVRELMDKKGSIYSSRPPSPMINMVSNGERLNFLPYGHKWRTIRNILHSALNLETSSTYKPVQDFESKQALWEILHAKDDMEFNDINRRYSTSTIMTITYGLRVPTLQHPLYQDILTIVRHFSLATAPGEWVIDMVPMLADIVPQFLLQNWKNVARKWYKEDSEIYLALYNKLMDDIKRGTAPDCFLKDMAREKLKKNPIADTTAAFAAGALIEAGSDATTTALNNVVLACLLYPEIVKGAHEELDRVVGSDRMPEFSDEPNLPYIRGIAKETLRWRASTKVGPAHATTQDDWYNGYFIPKGTGVVLNWWAIHMNEKRWKDPERFDPTRYLEDTLTEAESMAQPNPELRDHFTFGAGRRNCPGVHIAHNSLFINIARIFWAFNKQKSKDADGKILEPSTAAQPGFLLTPVKFPCHFEARSDKHARIIEERWTEAQEKGIDGWKGKKESSSEENRGVSSR.

Residues 3-23 (VALFPILPIGCLLIYIIFKLW) form a helical membrane-spanning segment. Cysteine 446 contacts heme. A disordered region spans residues 520 to 544 (QEKGIDGWKGKKESSSEENRGVSSR).

Belongs to the cytochrome P450 family. Heme serves as cofactor.

The protein resides in the membrane. It functions in the pathway mycotoxin biosynthesis. Functionally, cytochrome P450 monooxygenase; part of the gene cluster that mediates the biosynthesis of 11'-deoxyverticillin A, one of the dimeric epipolythiodioxopiperazines (ETPs) from the verticillin family that act as mycotoxins. 11'-deoxyverticillin A is required for normal conidiation. The nonribosomal peptide synthetase verP is speculated to be responsible for condensation of amino acids to form the carbon skeleton of verticillin, whereas the cluster-specific tailoring enzymes are involved in further modifications leading to the production of 11'-deoxyverticillin A. The chain is Cytochrome P450 monooxygenase verL from Clonostachys rogersoniana.